We begin with the raw amino-acid sequence, 513 residues long: GMP synthase [glutamine-hydrolyzing] (513 aa).

The Glutamine amidotransferase type-1 domain maps to 8 to 198; the sequence is MILVLDFGSQ…VFGVCDCEGK (191 aa). The active-site Nucleophile is Cys85. Residues His172 and Glu174 contribute to the active site. One can recognise a GMPS ATP-PPase domain in the interval 199-388; it reads WSMENFIEIE…LGLPDDIVWR (190 aa). 226–232 is an ATP binding site; the sequence is SGGVDSS.

Homodimer.

The enzyme catalyses XMP + L-glutamine + ATP + H2O = GMP + L-glutamate + AMP + diphosphate + 2 H(+). Its pathway is purine metabolism; GMP biosynthesis; GMP from XMP (L-Gln route): step 1/1. In terms of biological role, catalyzes the synthesis of GMP from XMP. The chain is GMP synthase [glutamine-hydrolyzing] from Bacillus velezensis (strain DSM 23117 / BGSC 10A6 / LMG 26770 / FZB42) (Bacillus amyloliquefaciens subsp. plantarum).